The following is a 92-amino-acid chain: Small ribosomal subunit protein uS19 (92 aa).

Residues 72–92 form a disordered region; that stretch reads GEFSPTRSFRGHAGAKNKGKK. Residues 80–92 are compositionally biased toward basic residues; that stretch reads FRGHAGAKNKGKK.

The protein belongs to the universal ribosomal protein uS19 family.

Its function is as follows. Protein S19 forms a complex with S13 that binds strongly to the 16S ribosomal RNA. This Flavobacterium johnsoniae (strain ATCC 17061 / DSM 2064 / JCM 8514 / BCRC 14874 / CCUG 350202 / NBRC 14942 / NCIMB 11054 / UW101) (Cytophaga johnsonae) protein is Small ribosomal subunit protein uS19.